Here is a 151-residue protein sequence, read N- to C-terminus: uncharacterized protein (151 aa).

2 BON domains span residues 2–68 (DDAA…AVDK) and 78–146 (IDSA…RLKH).

This is an uncharacterized protein from Anaplasma centrale.